A 1293-amino-acid chain; its full sequence is Phosphoribosylformylglycinamidine synthase (1293 aa).

Residues 305–316 and A676 contribute to the ATP site; that span reads GAATGSGGEIRD. The tract at residues 305-328 is disordered; sequence GAATGSGGEIRDEGATGRGSKPKA. D677, E716, N720, and D884 together coordinate Mg(2+). S886 contacts ATP. The 254-residue stretch at 1040–1293 folds into the Glutamine amidotransferase type-1 domain; it reads MAILREQGVN…MFRNARVNLG (254 aa). The active-site Nucleophile is the C1133. Catalysis depends on residues H1258 and E1260.

This sequence in the N-terminal section; belongs to the FGAMS family. As to quaternary structure, monomer.

Its subcellular location is the cytoplasm. The catalysed reaction is N(2)-formyl-N(1)-(5-phospho-beta-D-ribosyl)glycinamide + L-glutamine + ATP + H2O = 2-formamido-N(1)-(5-O-phospho-beta-D-ribosyl)acetamidine + L-glutamate + ADP + phosphate + H(+). Its pathway is purine metabolism; IMP biosynthesis via de novo pathway; 5-amino-1-(5-phospho-D-ribosyl)imidazole from N(2)-formyl-N(1)-(5-phospho-D-ribosyl)glycinamide: step 1/2. Phosphoribosylformylglycinamidine synthase involved in the purines biosynthetic pathway. Catalyzes the ATP-dependent conversion of formylglycinamide ribonucleotide (FGAR) and glutamine to yield formylglycinamidine ribonucleotide (FGAM) and glutamate. The sequence is that of Phosphoribosylformylglycinamidine synthase from Shewanella sp. (strain MR-7).